The following is a 90-amino-acid chain: MVKNSFISVIPQEEKEKNKGSVEFQVFSFTNKIRRLTSHLELHRKDYLSQRGLRKILGKRQRLLAYLSKKNRVRYKELIGRLDIREPKTR.

Belongs to the universal ribosomal protein uS15 family. In terms of assembly, part of the 30S ribosomal subunit.

It localises to the plastid. Its subcellular location is the chloroplast. The protein is Small ribosomal subunit protein uS15c (rps15) of Liriodendron tulipifera (Tuliptree).